Here is a 630-residue protein sequence, read N- to C-terminus: MGSALSSCCSPRRKNAYEPLLLETEREAVADLLQYLENRSTTNFFAGSPLAALTTLSFSENVDLQRSAALAFAEITEKEVREVGRDTLDPVLYLLSSHDPEVQRAASAALGNLAVNAENKLLVVSLGGLEPLIRQMLSPNVEVQCNAVGCITNLATHDENKTQIAKSGALVPLTRLAKSKDMRVQRNATGALLNMTHSDENRQQLVAAGAIPVLVSLLNSPDTDVQYYCTTALSNIAVDAANRKKLAQSEPKLVQSLVQLMDSQSLKVQCQAALALRNLASDSKYQLEIVKFGGLKPLLRLLHSSYLPLILSAAACVRNVSIHPANESPIIESGFLQPLIELLSFDENEEVQCHAISTLRNLAASSEKNKGAIVEAGAVEKIKSLVLTVPLAVQSEMTACVAVLALSDDLKPQLLEMGICEVLIPLTNSPSVEVQGNSAAALGNLSSKAAEDYAPFNAVWNKPDGGLHAYLVRFLSSADITFQHIAVWTIVQLLEAEDEQLTNNIRSSPILISSIRQLAKSPPPSRAGGAPRHDPNDPSAGSSEDEFEDGLTDQEGEGEIVSLARRILDLTEVGEEGDEFGERAGRNVPVGSHGQAPGQGQTSQVGSMGSEHAALRASVHRALSGGGRDR.

The N-myristoyl glycine moiety is linked to residue G2. 9 ARM repeats span residues 74-115 (EITE…NLAV), 117-156 (AENK…NLAT), 158-197 (DENK…NMTH), 199-238 (DENR…NIAV), 242-281 (NRKK…NLAS), 283-322 (SKYQ…NVSI), 324-364 (PANE…NLAA), 408-447 (DDLK…NLSS), and 456-495 (FNAV…QLLE). Disordered stretches follow at residues 519-558 (AKSP…EGEG) and 572-630 (EVGE…GRDR). Residues 543–558 (SEDEFEDGLTDQEGEG) are compositionally biased toward acidic residues. The segment covering 598–607 (GQGQTSQVGS) has biased composition (polar residues).

The protein belongs to the beta-catenin family.

It is found in the vacuole membrane. Functionally, functions in both vacuole inheritance and protein targeting from the cytoplasm to vacuole. The sequence is that of Vacuolar protein 8 (VAC8) from Cryptococcus neoformans var. neoformans serotype D (strain B-3501A) (Filobasidiella neoformans).